The following is a 304-amino-acid chain: Light-independent protochlorophyllide reductase iron-sulfur ATP-binding protein (304 aa).

ATP contacts are provided by residues 46–51 and Lys-75; that span reads GIGKST. A Mg(2+)-binding site is contributed by Ser-50. [4Fe-4S] cluster-binding residues include Cys-131 and Cys-165. ATP is bound by residues 216–217 and 240–242; these read NR and PDL.

Belongs to the NifH/BchL/ChlL family. Homodimer. Protochlorophyllide reductase is composed of three subunits; BchL, BchN and BchB. [4Fe-4S] cluster is required as a cofactor.

The catalysed reaction is chlorophyllide a + oxidized 2[4Fe-4S]-[ferredoxin] + 2 ADP + 2 phosphate = protochlorophyllide a + reduced 2[4Fe-4S]-[ferredoxin] + 2 ATP + 2 H2O. It functions in the pathway porphyrin-containing compound metabolism; bacteriochlorophyll biosynthesis (light-independent). Component of the dark-operative protochlorophyllide reductase (DPOR) that uses Mg-ATP and reduced ferredoxin to reduce ring D of protochlorophyllide (Pchlide) to form chlorophyllide a (Chlide). This reaction is light-independent. The L component serves as a unique electron donor to the NB-component of the complex, and binds Mg-ATP. The sequence is that of Light-independent protochlorophyllide reductase iron-sulfur ATP-binding protein from Rhodobacter capsulatus (strain ATCC BAA-309 / NBRC 16581 / SB1003).